A 902-amino-acid polypeptide reads, in one-letter code: Glutamate receptor 4 (902 aa).

An N-terminal signal peptide occupies residues 1 to 20; the sequence is MRIISRQIVLLFSGFWGLAM. Residues 22-544 are Extracellular-facing; that stretch reads AFPSSVQIGG…GVFSFLDPLA (523 aa). 6 N-linked (GlcNAc...) asparagine glycosylation sites follow: Asn52, Asn56, Asn258, Asn371, Asn407, and Asn414. Cys84 and Cys331 are oxidised to a cystine. Positions 500, 502, and 507 each coordinate L-glutamate. Residues 545-565 traverse the membrane as a helical segment; sequence YEIWMCIVFAYIGVSVVLFLV. At 566-592 the chain is on the cytoplasmic side; sequence SRFSPYEWHTEEPEDGKEGPSDQPPNE. Residues 593–608 constitute an intramembrane region (helical; Pore-forming); sequence FGIFNSLWFSLGAFMQ. An intramembrane segment occupies 609–611; sequence QGC. Residue Cys611 is the site of S-palmitoyl cysteine attachment. Residues 612–617 are Cytoplasmic-facing; sequence DISPRS. Residues 618–638 form a helical membrane-spanning segment; it reads LSGRIVGGVWWFFTLIIISSY. At 639-813 the chain is on the extracellular side; the sequence is TANLAAFLTV…DKTSALSLSN (175 aa). L-glutamate contacts are provided by Ser676, Thr677, and Glu727. Cysteines 740 and 795 form a disulfide. A helical membrane pass occupies residues 814–834; the sequence is VAGVFYILVGGLGLAMLVALI. At 835–902 the chain is on the cytoplasmic side; the sequence is EFCYKSRAEA…GLAVIASDLP (68 aa). Cys837 carries S-palmitoyl cysteine lipidation. A Phosphoserine; by PKC/PRKCG modification is found at Ser862.

This sequence belongs to the glutamate-gated ion channel (TC 1.A.10.1) family. GRIA4 subfamily. In terms of assembly, homotetramer or heterotetramer of pore-forming glutamate receptor subunits. Tetramers may be formed by the dimerization of dimers. Interacts with EPB41L1 via its C-terminus. Isoform 3 interacts with PICK1. Found in a complex with GRIA1, GRIA2, GRIA3, CNIH2, CNIH3, CACNG2, CACNG3, CACNG4, CACNG5, CACNG7 and CACNG8. Interacts with CACNG5 and PRKCG. Found in a complex with GRIA1, GRIA2, GRIA3, DLG4, CACNG8 and CNIH2. Palmitoylated. Depalmitoylated upon L-glutamate stimulation. ZDHHC3/GODZ specifically palmitoylates Cys-611, which leads to Golgi retention and decreased cell surface expression. In contrast, Cys-837 palmitoylation does not affect cell surface expression but regulates stimulation-dependent endocytosis. In terms of processing, phosphorylated at Ser-862 by PRKCG; phosphorylation increases plasma membrane-associated GRI4 expression.

The protein localises to the cell membrane. It localises to the postsynaptic cell membrane. It is found in the cell projection. Its subcellular location is the dendrite. The enzyme catalyses Ca(2+)(in) = Ca(2+)(out). The catalysed reaction is Na(+)(in) = Na(+)(out). It catalyses the reaction Mg(2+)(in) = Mg(2+)(out). Functionally, ionotropic glutamate receptor that functions as a ligand-gated cation channel, gated by L-glutamate and glutamatergic agonists such as alpha-amino-3-hydroxy-5-methyl-4-isoxazolepropionic acid (AMPA), quisqualic acid, and kainic acid. L-glutamate acts as an excitatory neurotransmitter at many synapses in the central nervous system and plays an important role in fast excitatory synaptic transmission. Binding of the excitatory neurotransmitter L-glutamate induces a conformation change, leading to the opening of the cation channel, and thereby converts the chemical signal to an electrical impulse upon entry of monovalent and divalent cations such as sodium and calcium. The receptor then desensitizes rapidly and enters a transient inactive state, characterized by the presence of bound agonist. In the presence of CACNG8, shows resensitization which is characterized by a delayed accumulation of current flux upon continued application of L-glutamate. This Macaca fascicularis (Crab-eating macaque) protein is Glutamate receptor 4.